The chain runs to 179 residues: Large ribosomal subunit protein uL5 (179 aa).

This sequence belongs to the universal ribosomal protein uL5 family. In terms of assembly, part of the 50S ribosomal subunit; part of the 5S rRNA/L5/L18/L25 subcomplex. Contacts the 5S rRNA and the P site tRNA. Forms a bridge to the 30S subunit in the 70S ribosome.

This is one of the proteins that bind and probably mediate the attachment of the 5S RNA into the large ribosomal subunit, where it forms part of the central protuberance. In the 70S ribosome it contacts protein S13 of the 30S subunit (bridge B1b), connecting the 2 subunits; this bridge is implicated in subunit movement. Contacts the P site tRNA; the 5S rRNA and some of its associated proteins might help stabilize positioning of ribosome-bound tRNAs. The polypeptide is Large ribosomal subunit protein uL5 (Bacillus mycoides (strain KBAB4) (Bacillus weihenstephanensis)).